The sequence spans 3931 residues: Replicase polyprotein 1ab (3931 aa).

A C4-type; atypical zinc finger spans residues cysteine 8 to cysteine 28. Positions glutamate 69–aspartate 182 are PCP1-alpha. Active-site for nsp1-alpha papain-like cysteine proteinase activity residues include cysteine 76 and histidine 146. The tract at residues valine 199–serine 200 is important for host EIF2AK2 inhibition. Active-site for nsp1-beta papain-like cysteine proteinase activity residues include cysteine 270 and histidine 339. Residues leucine 426 to proline 513 are OTU-like. Residues arginine 428–valine 536 enclose the Peptidase C33 domain. Active-site for nsp2 cysteine proteinase activity residues include cysteine 437 and histidine 506. Disordered stretches follow at residues arginine 809 to proline 868 and threonine 1118 to valine 1164. Over residues tryptophan 810 to valine 819 the composition is skewed to pro residues. Over residues proline 1139 to aspartate 1151 the composition is skewed to basic and acidic residues. A run of 3 helical transmembrane segments spans residues serine 1221 to cysteine 1241, glycine 1266 to valine 1286, and tryptophan 1339 to leucine 1359. The HD1 stretch occupies residues phenylalanine 1236–leucine 1359. A WCCH region spans residues threonine 1414–glutamine 1438. 5 consecutive transmembrane segments (helical) span residues isoleucine 1554–threonine 1574, leucine 1607–leucine 1627, glutamate 1629–cysteine 1649, alanine 1659–leucine 1679, and phenylalanine 1695–tryptophan 1715. Residues isoleucine 1554 to tryptophan 1715 are HD2. Active-site charge relay system; for serine protease nsp4 activity residues include histidine 1818, aspartate 1843, and serine 1897. A run of 4 helical transmembrane segments spans residues tryptophan 2006 to valine 2026, phenylalanine 2030 to isoleucine 2050, leucine 2064 to glycine 2084, and serine 2107 to phenylalanine 2127. Residues tryptophan 2006–phenylalanine 2127 form an HD3 region.

The protein belongs to the arteriviridae polyprotein family. As to quaternary structure, nsp1-alpha papain-like: Interacts with host RNF31. Interacts with host EIF2AK2; this interaction occurs in host stress granules and leads to EIF2AK2 inhibition. Interacts with host G3BP1; this interaction probably plays a role in Nsp1-beta-mediated inhibition of host EIF2AK2. In terms of assembly, interacts with host DDX18; this interaction redistributes host DDX18 to the cytoplasm. As to quaternary structure, interacts with host IFITM1. Interacts with host DDX5. In terms of assembly, interacts with host OTULIN. As to quaternary structure, interacts with host LGALS3. Specific enzymatic cleavages in vivo by its own proteases yield mature proteins. Nsp1 is autocleaved into two subunits, Nsp1-alpha and Nsp1-beta. There are two alternative pathways for processing. Either nsp4-5 is cleaved, which represents the major pathway or the nsp5-6 and nsp6-7 are processed, which represents the minor pathway. The major pathway occurs when nsp2 acts as a cofactor for nsp4.

The protein resides in the host nucleus. It is found in the host cytoplasm. Its subcellular location is the host membrane. It localises to the host endoplasmic reticulum. The protein localises to the host perinuclear region. The catalysed reaction is RNA(n) + a ribonucleoside 5'-triphosphate = RNA(n+1) + diphosphate. It catalyses the reaction ATP + H2O = ADP + phosphate + H(+). It carries out the reaction Thiol-dependent hydrolysis of ester, thioester, amide, peptide and isopeptide bonds formed by the C-terminal Gly of ubiquitin (a 76-residue protein attached to proteins as an intracellular targeting signal).. The enzyme catalyses uridylyl-uridylyl-ribonucleotide-RNA = a 3'-end uridylyl-2',3'-cyclophospho-uridine-RNA + a 5'-end dephospho-ribonucleoside-RNA. Contains the activities necessary for the transcription of negative stranded RNA, leader RNA, subgenomic mRNAs and progeny virion RNA as well as proteinases responsible for the cleavage of the polyprotein into functional products. In terms of biological role, inhibits host IFN-beta production. Plays a role in the degradation of the host transcriptional activator CREBBP protein. The degradation of host CREBBP which is a key component of the IFN enhanceosome is likely responsible for the inhibition of interferon mediated by Nsp1-alpha. Also participates in the inhibition of host NF-kappa-B activation by counteracting LUBAC-dependent induction of NF-kappa-B. Reduces host NEMO ubiquitination by blocking the interaction between the two LUBAC complex components RNF31 and SHARPIN. Functionally, plays a role in blocking host mRNA nuclear export to the cytoplasm and subversion of host protein synthesis. Additionally, inhibits the interferon-activated JAK/STAT signal transduction by mediating the ubiquitination and subsequent proteasomal degradation of host KPNA1. Repurposes the host antiviral stress granules into a proviral platform to counteract the EIF2AK2/PKR restriction, thereby regulating the host inflammatory response. Its function is as follows. Multifunctional protein that acts as a viral protease and as a viral antagonist of host immune response. Cleaves the nsp2/nsp3 site in the viral polyprotein. Displays deubiquitinating activity that cleaves both ubiquitinated and ISGylated products and therefore inhibits ubiquitin and ISG15-dependent host innate immunity. Also deubiquinates host NFKBIA, thereby interfering with NFKBIA degradation and impairing subsequent NF-kappa-B activation. Plays a role in the inhibition of the immune response by interacting with host IFITM1. This interaction leads to the proteasomal degradation of the IFN-induced antiviral protein IFITM1. In terms of biological role, cleaves the majority of cleavage sites present in the C-terminus of the polyprotein. Triggers host apoptosis through caspase-3, -8, and -9 activations. Subverts host innate immune responses through its protease activity. Targets the NF-kappa-B essential modulator NEMO and mediates its cleavage. Blocks host interferon beta induction and downstream signaling by cleaving mitochondrial MAVS, dislodging it from the mitochondria. Impairs host defense by cleaving host mRNA-decapping enzyme DCP1A to attenuate its antiviral activity. Functionally, plays a role in the initial induction of autophagosomes from host endoplasmic reticulum. Its function is as follows. Plays a role in the inhibition of host STAT3 signaling pathway by inducing the degradation of STAT3. Responsible for replication and transcription of the viral RNA genome. In terms of biological role, displays RNA and DNA duplex-unwinding activities with 5' to 3' polarity. Functionally, plays a role in viral transcription/replication and prevents the simultaneous activation of host cell dsRNA sensors, such as MDA5/IFIH1, OAS, PKR and NLRP3 inflammasome. Acts by degrading the 5'-polyuridines generated during replication of the poly(A) region of viral genomic and subgenomic RNAs. Catalyzes a two-step reaction in which a 2'3'-cyclic phosphate (2'3'-cP) is first generated by 2'-O transesterification, which is then hydrolyzed to a 3'-phosphate (3'-P). If not degraded, poly(U) RNA would hybridize with poly(A) RNA tails and activate host dsRNA sensors. Also plays a role in the inhibition of host type I interferon production by recruiting host OTULIN to promote removal of linear ubiquitination targeting host NEMO. This is Replicase polyprotein 1ab from Porcine reproductive and respiratory syndrome virus (PRRSV).